The chain runs to 607 residues: Thymidine kinase (607 aa).

2 disordered regions span residues 1–160 and 180–215; these read MAGF…ADST and DDKSDCESEDESNFRRPSSHSALKQKNGGKGKPSGL. Residues 17-32 are compositionally biased toward basic and acidic residues; sequence KCQEDESPENERHENF. Polar residues-rich tracts occupy residues 88-106, 148-160, and 194-203; these read AAVTSNTGNSPGSRHTSCP, RKTSCTEGGADST, and RRPSSHSALK. 291–298 contacts ATP; the sequence is GAPGVGKT. Glu317 acts as the Proton acceptor in catalysis. Gln355 lines the substrate pocket. Arg445 is a binding site for ATP. Residue Arg451 participates in substrate binding.

The protein belongs to the herpesviridae thymidine kinase family. Homodimer.

It is found in the virion tegument. Its subcellular location is the host nucleus. It carries out the reaction thymidine + ATP = dTMP + ADP + H(+). Functionally, catalyzes the transfer of the gamma-phospho group of ATP to thymidine to generate dTMP in the salvage pathway of pyrimidine synthesis. The dTMP serves as a substrate for DNA polymerase during viral DNA replication. Allows the virus to be reactivated and to grow in non-proliferative cells lacking a high concentration of phosphorylated nucleic acid precursors. The protein is Thymidine kinase of Epstein-Barr virus (strain AG876) (HHV-4).